The chain runs to 347 residues: Beta-hexosaminidase (347 aa).

Substrate contacts are provided by residues Asp-64, Arg-72, Arg-138, and 168–169 (KH). The active-site Proton donor/acceptor is the His-181. Residue Asp-251 is the Nucleophile of the active site.

Belongs to the glycosyl hydrolase 3 family. NagZ subfamily.

It is found in the cytoplasm. It carries out the reaction Hydrolysis of terminal non-reducing N-acetyl-D-hexosamine residues in N-acetyl-beta-D-hexosaminides.. It participates in cell wall biogenesis; peptidoglycan recycling. Functionally, plays a role in peptidoglycan recycling by cleaving the terminal beta-1,4-linked N-acetylglucosamine (GlcNAc) from peptide-linked peptidoglycan fragments, giving rise to free GlcNAc, anhydro-N-acetylmuramic acid and anhydro-N-acetylmuramic acid-linked peptides. In Thioalkalivibrio sulfidiphilus (strain HL-EbGR7), this protein is Beta-hexosaminidase.